The sequence spans 151 residues: SsrA-binding protein (151 aa).

The segment at 132–151 (KRQTIKKRDQDREIHRKYGI) is disordered.

It belongs to the SmpB family.

It is found in the cytoplasm. Required for rescue of stalled ribosomes mediated by trans-translation. Binds to transfer-messenger RNA (tmRNA), required for stable association of tmRNA with ribosomes. tmRNA and SmpB together mimic tRNA shape, replacing the anticodon stem-loop with SmpB. tmRNA is encoded by the ssrA gene; the 2 termini fold to resemble tRNA(Ala) and it encodes a 'tag peptide', a short internal open reading frame. During trans-translation Ala-aminoacylated tmRNA acts like a tRNA, entering the A-site of stalled ribosomes, displacing the stalled mRNA. The ribosome then switches to translate the ORF on the tmRNA; the nascent peptide is terminated with the 'tag peptide' encoded by the tmRNA and targeted for degradation. The ribosome is freed to recommence translation, which seems to be the essential function of trans-translation. The polypeptide is SsrA-binding protein (Lactobacillus gasseri (strain ATCC 33323 / DSM 20243 / BCRC 14619 / CIP 102991 / JCM 1131 / KCTC 3163 / NCIMB 11718 / NCTC 13722 / AM63)).